The sequence spans 180 residues: Chromosome-anchoring protein RacA (180 aa).

Residues 5–25 (TPFIAKKLGVSPKAVVRIAQQ) constitute a DNA-binding region (H-T-H motif). Residues 67–151 (KASSNEVEEL…LEAALTKEEP (85 aa)) adopt a coiled-coil conformation.

Belongs to the RacA family.

It localises to the cytoplasm. Required for the formation of axial filaments and for anchoring the origin regions at the cell poles in sporulating cells, thus ensuring proper chromosome segregation in the prespore. Binds in a dispersed manner throughout the chromosome but preferentially to sites clustered in the origin portion of the chromosome, causing condensation of the chromosome and its remodeling into an elongated, anchored structure. This Bacillus cereus (strain B4264) protein is Chromosome-anchoring protein RacA.